The primary structure comprises 577 residues: Aspartate--tRNA(Asp/Asn) ligase (577 aa).

An L-aspartate-binding site is contributed by Glu171. Residues 195–198 are aspartate; the sequence is QLFK. L-aspartate is bound at residue Arg217. ATP-binding positions include 217 to 219 and Gln226; that span reads RDE. His444 provides a ligand contact to L-aspartate. Glu474 contributes to the ATP binding site. Residue Arg481 coordinates L-aspartate. Residue 526-529 coordinates ATP; the sequence is GFDR.

This sequence belongs to the class-II aminoacyl-tRNA synthetase family. Type 1 subfamily. In terms of assembly, homodimer.

Its subcellular location is the cytoplasm. It carries out the reaction tRNA(Asx) + L-aspartate + ATP = L-aspartyl-tRNA(Asx) + AMP + diphosphate. Its function is as follows. Aspartyl-tRNA synthetase with relaxed tRNA specificity since it is able to aspartylate not only its cognate tRNA(Asp) but also tRNA(Asn). Is 1.7 times more efficient at aminoacylating tRNA(Asp) over tRNA(Asn). Reaction proceeds in two steps: L-aspartate is first activated by ATP to form Asp-AMP and then transferred to the acceptor end of tRNA(Asp/Asn). This is Aspartate--tRNA(Asp/Asn) ligase from Helicobacter pylori (strain ATCC 700392 / 26695) (Campylobacter pylori).